The primary structure comprises 449 residues: UDP-N-acetylmuramoylalanine--D-glutamate ligase (449 aa).

Gly118–Thr124 contributes to the ATP binding site.

This sequence belongs to the MurCDEF family.

It localises to the cytoplasm. The enzyme catalyses UDP-N-acetyl-alpha-D-muramoyl-L-alanine + D-glutamate + ATP = UDP-N-acetyl-alpha-D-muramoyl-L-alanyl-D-glutamate + ADP + phosphate + H(+). Its pathway is cell wall biogenesis; peptidoglycan biosynthesis. Its function is as follows. Cell wall formation. Catalyzes the addition of glutamate to the nucleotide precursor UDP-N-acetylmuramoyl-L-alanine (UMA). This is UDP-N-acetylmuramoylalanine--D-glutamate ligase from Staphylococcus aureus (strain MSSA476).